Here is a 343-residue protein sequence, read N- to C-terminus: Transmembrane protein 120A (343 aa).

Residues 1 to 132 are Cytoplasmic-facing; it reads MHPPPPGPLG…KQAKFAYKDE (132 aa). Residue Lys130 coordinates CoA. The chain crosses the membrane as a helical span at residues 133-152; the sequence is YEKFKLYLTIILILISFTCR. Topologically, residues 153 to 158 are extracellular; the sequence is FLLNSR. A helical transmembrane segment spans residues 159–177; the sequence is VTDAAFNFLLVWYYCTLTI. Residues 178 to 190 are Cytoplasmic-facing; sequence RESILINNGSRIK. Residues Ser187 and Arg188 each contribute to the CoA site. Residues 191 to 209 form a helical membrane-spanning segment; the sequence is GWWVFHHYVSTFLSGVMLT. The Extracellular segment spans residues 210 to 218; sequence WPDGLMYQK. Residues 219–240 traverse the membrane as a helical segment; sequence FRNQFLSFSMYQSFVQFLQYYY. CoA contacts are provided by Gln237, Tyr240, Gln241, and His283. Topologically, residues 241 to 270 are cytoplasmic; sequence QSGCLYRLRALGERHTMDLTVEGFQSWMWR. Residues 271-294 traverse the membrane as a helical segment; that stretch reads GLTFLLPFLFFGHFWQLFNALTLF. Residues 295–304 are Extracellular-facing; it reads NLARDPECKE. Residues 305 to 330 traverse the membrane as a helical segment; the sequence is WQVLMCGFPFLLLFLGNFFTTLRVVH. The Cytoplasmic portion of the chain corresponds to 331 to 343; sequence QKFHNQLHGSKKE. Lys332 contacts CoA.

It belongs to the TMEM120 family. Homodimer. Forms heterooligomer with TMEM120B. Interacts with PKD2; TMEM120A inhibits PKD2 channel activity through the physical association of PKD2 with TMEM120A.

The protein localises to the cell membrane. Its subcellular location is the nucleus inner membrane. It is found in the endoplasmic reticulum. In terms of biological role, multifunctional protein involved in mechanosensation, and plays an essential role in lipid metabolism and adipocyte differentiation. May function as an ion channel involved in sensing mechanical stimuli. Mediates the mechanosensitivity of the PKD2-TMEM120A channel complex through direct physical interaction. TMEM120A seems to affect mechanosensation by inhibiting PIEZO2 channels, possibly by altering cellular lipid content. TMEM120A is structurally similar to a lipid-modifying enzyme, ELOVL7, and contains a bound coenzyme A molecule, which suggests it might function as an enzyme in lipid metabolism. Additionnaly, implicated in innate immune response against Zika virus. Acts as a key activator of the antiviral signaling involving STING1. The protein is Transmembrane protein 120A of Bos taurus (Bovine).